A 258-amino-acid polypeptide reads, in one-letter code: Large ribosomal subunit protein eL8z (258 aa).

The interval 1 to 20 (MAPKRGGRAPVPAKKKTEKV) is disordered.

It belongs to the eukaryotic ribosomal protein eL8 family.

In Oryza sativa subsp. japonica (Rice), this protein is Large ribosomal subunit protein eL8z (RPL7A-1).